The following is a 176-amino-acid chain: Protein tyrosine phosphatase PRL-1 (176 aa).

The 153-residue stretch at 13–165 (GESDAVVFRF…YKPRHQEGNE (153 aa)) folds into the Tyrosine-protein phosphatase domain. Cys-52 and Cys-107 are joined by a disulfide. Asp-75 functions as the Proton donor in the catalytic mechanism. Cys-107 (phosphocysteine intermediate) is an active-site residue. Residue 109 to 113 (AGLGR) coordinates substrate. A Cysteine methyl ester modification is found at Cys-173. Cys-173 is lipidated: S-farnesyl cysteine. A propeptide spans 174–176 (AVM) (removed in mature form).

This sequence belongs to the protein-tyrosine phosphatase family.

Its subcellular location is the flagellar pocket. It carries out the reaction O-phospho-L-tyrosyl-[protein] + H2O = L-tyrosyl-[protein] + phosphate. Activated in a reduced environment which promotes the reduction of the disulfide bond between the regulatory Cys-52 and the catalytic Cys-107 residues. Inhibited by sodium orthovanadate. In terms of biological role, has protein tyrosine phosphatase activity. The polypeptide is Protein tyrosine phosphatase PRL-1 (Trypanosoma cruzi (strain CL Brener)).